The primary structure comprises 175 residues: tRNA (cytidine(56)-2'-O)-methyltransferase (175 aa).

S-adenosyl-L-methionine is bound at residue leucine 82.

Belongs to the aTrm56 family. In terms of assembly, homodimer.

The protein resides in the cytoplasm. The catalysed reaction is cytidine(56) in tRNA + S-adenosyl-L-methionine = 2'-O-methylcytidine(56) in tRNA + S-adenosyl-L-homocysteine + H(+). Its function is as follows. Specifically catalyzes the AdoMet-dependent 2'-O-ribose methylation of cytidine at position 56 in tRNAs. The chain is tRNA (cytidine(56)-2'-O)-methyltransferase from Cenarchaeum symbiosum (strain A).